The primary structure comprises 139 residues: Protein LTO1 homolog (139 aa).

Belongs to the LTO1 family.

In Dictyostelium discoideum (Social amoeba), this protein is Protein LTO1 homolog.